The primary structure comprises 292 residues: Glycine--tRNA ligase alpha subunit (292 aa).

Belongs to the class-II aminoacyl-tRNA synthetase family. As to quaternary structure, tetramer of two alpha and two beta subunits.

It is found in the cytoplasm. The enzyme catalyses tRNA(Gly) + glycine + ATP = glycyl-tRNA(Gly) + AMP + diphosphate. This is Glycine--tRNA ligase alpha subunit from Synechococcus elongatus (strain ATCC 33912 / PCC 7942 / FACHB-805) (Anacystis nidulans R2).